Reading from the N-terminus, the 739-residue chain is Probable beta-glucosidase L (739 aa).

The signal sequence occupies residues Met-1–Ala-17. N-linked (GlcNAc...) asparagine glycosylation is present at Asn-224. Asp-252 is a catalytic residue. Asn-398 carries an N-linked (GlcNAc...) asparagine glycan.

This sequence belongs to the glycosyl hydrolase 3 family.

It localises to the secreted. It catalyses the reaction Hydrolysis of terminal, non-reducing beta-D-glucosyl residues with release of beta-D-glucose.. It functions in the pathway glycan metabolism; cellulose degradation. In terms of biological role, beta-glucosidases are one of a number of cellulolytic enzymes involved in the degradation of cellulosic biomass. Catalyzes the last step releasing glucose from the inhibitory cellobiose. The protein is Probable beta-glucosidase L (bglL) of Neosartorya fischeri (strain ATCC 1020 / DSM 3700 / CBS 544.65 / FGSC A1164 / JCM 1740 / NRRL 181 / WB 181) (Aspergillus fischerianus).